Reading from the N-terminus, the 159-residue chain is Ribosomal RNA large subunit methyltransferase H (159 aa).

G108 is an S-adenosyl-L-methionine binding site.

This sequence belongs to the RNA methyltransferase RlmH family. As to quaternary structure, homodimer.

The protein localises to the cytoplasm. It catalyses the reaction pseudouridine(1915) in 23S rRNA + S-adenosyl-L-methionine = N(3)-methylpseudouridine(1915) in 23S rRNA + S-adenosyl-L-homocysteine + H(+). In terms of biological role, specifically methylates the pseudouridine at position 1915 (m3Psi1915) in 23S rRNA. This is Ribosomal RNA large subunit methyltransferase H from Lactobacillus gasseri (strain ATCC 33323 / DSM 20243 / BCRC 14619 / CIP 102991 / JCM 1131 / KCTC 3163 / NCIMB 11718 / NCTC 13722 / AM63).